Consider the following 379-residue polypeptide: 3-isopropylmalate dehydrogenase 1 (379 aa).

Substrate is bound by residues R101, R111, R139, and D230. Positions 230, 254, and 258 each coordinate Mg(2+). Residue 293–305 (GSAPDIAGKGIAN) participates in NAD(+) binding.

Belongs to the isocitrate and isopropylmalate dehydrogenases family. LeuB type 1 subfamily. Homodimer. The cofactor is Mg(2+). Mn(2+) serves as cofactor.

The protein resides in the cytoplasm. It catalyses the reaction (2R,3S)-3-isopropylmalate + NAD(+) = 4-methyl-2-oxopentanoate + CO2 + NADH. It functions in the pathway amino-acid biosynthesis; L-leucine biosynthesis; L-leucine from 3-methyl-2-oxobutanoate: step 3/4. Catalyzes the oxidation of 3-carboxy-2-hydroxy-4-methylpentanoate (3-isopropylmalate) to 3-carboxy-4-methyl-2-oxopentanoate. The product decarboxylates to 4-methyl-2 oxopentanoate. This is 3-isopropylmalate dehydrogenase 1 from Bradyrhizobium diazoefficiens (strain JCM 10833 / BCRC 13528 / IAM 13628 / NBRC 14792 / USDA 110).